The chain runs to 571 residues: Proline--tRNA ligase (571 aa).

Belongs to the class-II aminoacyl-tRNA synthetase family. ProS type 1 subfamily. In terms of assembly, homodimer.

It is found in the cytoplasm. It carries out the reaction tRNA(Pro) + L-proline + ATP = L-prolyl-tRNA(Pro) + AMP + diphosphate. Functionally, catalyzes the attachment of proline to tRNA(Pro) in a two-step reaction: proline is first activated by ATP to form Pro-AMP and then transferred to the acceptor end of tRNA(Pro). As ProRS can inadvertently accommodate and process non-cognate amino acids such as alanine and cysteine, to avoid such errors it has two additional distinct editing activities against alanine. One activity is designated as 'pretransfer' editing and involves the tRNA(Pro)-independent hydrolysis of activated Ala-AMP. The other activity is designated 'posttransfer' editing and involves deacylation of mischarged Ala-tRNA(Pro). The misacylated Cys-tRNA(Pro) is not edited by ProRS. This chain is Proline--tRNA ligase, found in Pseudoalteromonas atlantica (strain T6c / ATCC BAA-1087).